A 65-amino-acid polypeptide reads, in one-letter code: Beta-defensin 17 (65 aa).

A signal peptide spans 1–19 (MKFHLLFFILLFSITILTG). 3 disulfide bridges follow: cysteine 35/cysteine 63, cysteine 42/cysteine 56, and cysteine 46/cysteine 64.

This sequence belongs to the beta-defensin family.

It is found in the secreted. Its function is as follows. Has antibacterial activity. The protein is Beta-defensin 17 (Defb17) of Rattus norvegicus (Rat).